We begin with the raw amino-acid sequence, 134 residues long: RxLR effector protein 4 (134 aa).

Residues 1–22 form the signal peptide; sequence MRSLFYIAVAVAVFARSSAVAA. Positions 43 to 65 are disordered; the sequence is AMASSDSRKRFLRATDPEDGDLQ. The segment covering 48–58 has biased composition (basic and acidic residues); it reads DSRKRFLRATD. The RxLR-dEER motif lies at 52–71; the sequence is RFLRATDPEDGDLQADDEER.

Belongs to the RxLR effector family.

The protein localises to the secreted. In terms of biological role, effector that enhances plant susceptibility to P.parasitica in Nicotiana benthamiana and Arabidopsis thaliana. Triggers non-specific cell death in a variety of plants, including tobacco, tomato, potato and A.thaliana. E4-induced cell death is dependent on HSP90, NPK and SGT1, suggesting that PpE4 is recognized by the plant immune system. This Phytophthora nicotianae (strain INRA-310) (Phytophthora parasitica) protein is RxLR effector protein 4.